Here is a 1252-residue protein sequence, read N- to C-terminus: Immunoglobulin superfamily DCC subclass member 4 (1252 aa).

An N-terminal signal peptide occupies residues 1–22 (MARADTGRGLLVLTFCLLSARG). Over 23 to 956 (ELPLPQETTV…SDSLDVHAVT (934 aa)) the chain is Extracellular. 4 consecutive Ig-like domains span residues 27–136 (PQET…VAVV), 142–228 (EDFS…ASLT), 241–329 (QDVV…AELR), and 334–420 (PAIS…APLA). 2 disulfides stabilise this stretch: C55–C120 and C163–C211. N-linked (GlcNAc...) asparagine glycosylation occurs at N88. N-linked (GlcNAc...) asparagine glycosylation is present at N251. Cystine bridges form between C264-C311 and C355-C404. 5 Fibronectin type-III domains span residues 430-524 (APTR…TLDD), 526-622 (PSAA…TPGV), 631-742 (APAE…TPDL), 751-844 (PPAH…TLPD), and 849-944 (PPSD…TLQK). Residues 669-688 (TEEEADGDRPPGGRGDQAWD) are disordered. A helical membrane pass occupies residues 957–977 (GIIVGVCLGLLCLLACMCAGL). The Cytoplasmic portion of the chain corresponds to 978–1252 (RRSSHREALP…RAPVSSAQVP (275 aa)). T994 is subject to Phosphothreonine.

Belongs to the immunoglobulin superfamily. DCC family. As to expression, expressed in skeletal muscle, heart and brain. Brain expression is hippocampus-specific.

Its subcellular location is the cell membrane. The protein is Immunoglobulin superfamily DCC subclass member 4 (Igdcc4) of Mus musculus (Mouse).